A 234-amino-acid chain; its full sequence is MSTPHINSKKDDFSDIVLMPGDPVRAKYIAEKYLSNFVQVNDTRLMLAYTGFYKNRKISIMSHGIGIPSASLYTRELIIEFNVKKIIRIGTCGAVRDDIKLRDIVISMGASTDSKVNRIRFNDHDFAAIADFDMIYNIVSISKKMKIKVSIGNFFTTDSFYNDDKKMLNILKKYNIIGVDMETAGIYGVASELKVQALSICTVSDHITNKEFLSSKERESSFNDMIELALESVL.

Histidine 5 serves as a coordination point for a purine D-ribonucleoside. Phosphate contacts are provided by residues glycine 21, arginine 25, arginine 44, and 88-91; that span reads RIGT. A purine D-ribonucleoside-binding positions include 180 to 182 and 204 to 205; these read DME and SD. Catalysis depends on aspartate 205, which acts as the Proton donor.

This sequence belongs to the PNP/UDP phosphorylase family. As to quaternary structure, homohexamer; trimer of homodimers.

It catalyses the reaction a purine D-ribonucleoside + phosphate = a purine nucleobase + alpha-D-ribose 1-phosphate. The enzyme catalyses a purine 2'-deoxy-D-ribonucleoside + phosphate = a purine nucleobase + 2-deoxy-alpha-D-ribose 1-phosphate. Its function is as follows. Catalyzes the reversible phosphorolytic breakdown of the N-glycosidic bond in the beta-(deoxy)ribonucleoside molecules, with the formation of the corresponding free purine bases and pentose-1-phosphate. The chain is Purine nucleoside phosphorylase DeoD-type from Buchnera aphidicola subsp. Acyrthosiphon pisum (strain APS) (Acyrthosiphon pisum symbiotic bacterium).